We begin with the raw amino-acid sequence, 921 residues long: DNA mismatch repair protein MutS 1 (921 aa).

Residue 619–626 coordinates ATP; that stretch reads GPNMSGKS. The tract at residues 837–887 is disordered; that stretch reads FRDGAAQSGGAAAGSTAEPVATDGDPEHAPGEAAAEGPKGDERAASLDSET. Low complexity predominate over residues 840-853; it reads GAAQSGGAAAGSTA.

The protein belongs to the DNA mismatch repair MutS family.

This protein is involved in the repair of mismatches in DNA. It is possible that it carries out the mismatch recognition step. This protein has a weak ATPase activity. This is DNA mismatch repair protein MutS 1 from Haloarcula marismortui (strain ATCC 43049 / DSM 3752 / JCM 8966 / VKM B-1809) (Halobacterium marismortui).